A 324-amino-acid polypeptide reads, in one-letter code: Homoserine kinase (324 aa).

87–97 contacts ATP; the sequence is PVARGMGSSAA.

Belongs to the GHMP kinase family. Homoserine kinase subfamily.

It localises to the cytoplasm. It catalyses the reaction L-homoserine + ATP = O-phospho-L-homoserine + ADP + H(+). The protein operates within amino-acid biosynthesis; L-threonine biosynthesis; L-threonine from L-aspartate: step 4/5. In terms of biological role, catalyzes the ATP-dependent phosphorylation of L-homoserine to L-homoserine phosphate. This is Homoserine kinase from Symbiobacterium thermophilum (strain DSM 24528 / JCM 14929 / IAM 14863 / T).